Consider the following 259-residue polypeptide: Tryptophan synthase alpha chain (259 aa).

Residues glutamate 52 and aspartate 63 each act as proton acceptor in the active site.

The protein belongs to the TrpA family. Tetramer of two alpha and two beta chains.

It carries out the reaction (1S,2R)-1-C-(indol-3-yl)glycerol 3-phosphate + L-serine = D-glyceraldehyde 3-phosphate + L-tryptophan + H2O. Its pathway is amino-acid biosynthesis; L-tryptophan biosynthesis; L-tryptophan from chorismate: step 5/5. Functionally, the alpha subunit is responsible for the aldol cleavage of indoleglycerol phosphate to indole and glyceraldehyde 3-phosphate. The chain is Tryptophan synthase alpha chain from Streptococcus gordonii (strain Challis / ATCC 35105 / BCRC 15272 / CH1 / DL1 / V288).